Consider the following 347-residue polypeptide: S-adenosylmethionine:tRNA ribosyltransferase-isomerase (347 aa).

Belongs to the QueA family. As to quaternary structure, monomer.

The protein localises to the cytoplasm. The enzyme catalyses 7-aminomethyl-7-carbaguanosine(34) in tRNA + S-adenosyl-L-methionine = epoxyqueuosine(34) in tRNA + adenine + L-methionine + 2 H(+). Its pathway is tRNA modification; tRNA-queuosine biosynthesis. Functionally, transfers and isomerizes the ribose moiety from AdoMet to the 7-aminomethyl group of 7-deazaguanine (preQ1-tRNA) to give epoxyqueuosine (oQ-tRNA). In Bordetella parapertussis (strain 12822 / ATCC BAA-587 / NCTC 13253), this protein is S-adenosylmethionine:tRNA ribosyltransferase-isomerase.